Reading from the N-terminus, the 270-residue chain is Thymidine kinase 2, mitochondrial (270 aa).

The N-terminal 38 residues, 1–38, are a transit peptide targeting the mitochondrion; the sequence is MLLRSLRSWAARSPRSVGPGSSGSPGSLDSGAGPLWAP. Positions 1–54 are disordered; the sequence is MLLRSLRSWAARSPRSVGPGSSGSPGSLDSGAGPLWAPRRAWPPDKDRENDKEK. Residues 13-34 show a composition bias toward low complexity; sequence SPRSVGPGSSGSPGSLDSGAGP. Positions 42-54 are enriched in basic and acidic residues; it reads WPPDKDRENDKEK. 62 to 70 lines the ATP pocket; the sequence is GNIASGKTT. The Proton acceptor role is filled by Glu138.

Belongs to the DCK/DGK family. As to quaternary structure, homodimer. In terms of tissue distribution, found in most tissues; highly expressed in liver.

The protein resides in the mitochondrion. The enzyme catalyses thymidine + ATP = dTMP + ADP + H(+). The catalysed reaction is 2'-deoxycytidine + ATP = dCMP + ADP + H(+). It carries out the reaction 2'-deoxyuridine + ATP = dUMP + ADP + H(+). In terms of biological role, phosphorylates thymidine, deoxycytidine, and deoxyuridine in the mitochondrial matrix. In non-replicating cells, where cytosolic dNTP synthesis is down-regulated, mtDNA synthesis depends solely on TK2 and DGUOK. The chain is Thymidine kinase 2, mitochondrial (Tk2) from Mus musculus (Mouse).